The primary structure comprises 949 residues: MAM domain-containing glycosylphosphatidylinositol anchor protein 2 (949 aa).

A signal peptide spans methionine 1 to alanine 25. 2 Ig-like domains span residues proline 27–aspartate 127 and proline 134–serine 232. Cystine bridges form between cysteine 62–cysteine 110 and cysteine 159–cysteine 216. 3 N-linked (GlcNAc...) asparagine glycosylation sites follow: asparagine 92, asparagine 213, and asparagine 237. Ig-like domains lie at proline 242–valine 328, proline 340–serine 436, proline 442–glutamine 533, and proline 540–threonine 627. Intrachain disulfides connect cysteine 264/cysteine 310 and cysteine 359/cysteine 417. N-linked (GlcNAc...) asparagine glycosylation is found at asparagine 434, asparagine 443, asparagine 504, asparagine 610, and asparagine 703. 2 cysteine pairs are disulfide-bonded: cysteine 465–cysteine 515 and cysteine 561–cysteine 611. A Fibronectin type-III domain is found at aspartate 638–glutamate 738. Residues phenylalanine 739–lysine 914 enclose the MAM domain. Residue aspartate 924 is the site of GPI-anchor amidated aspartate attachment. The propeptide at glycine 925–arginine 949 is removed in mature form.

As to quaternary structure, interacts (through the Ig-like domains) with NLGN2. In terms of tissue distribution, expressed predominantly in neuronal tissue. Expressed in brain.

It is found in the cell membrane. May be involved in cell-cell interactions. In Rattus norvegicus (Rat), this protein is MAM domain-containing glycosylphosphatidylinositol anchor protein 2 (Mdga2).